A 181-amino-acid chain; its full sequence is Transcription termination/antitermination protein NusG (181 aa).

The region spanning 130–161 (PGEMIRVNDGPFADFNGVVEEVDYEKSRLKVS) is the KOW domain.

Belongs to the NusG family. Monomer. Interacts with the transcription termination factor Rho and with RNA polymerase.

Functionally, participates in transcription elongation, termination and antitermination. In the absence of Rho, increases the rate of transcription elongation by the RNA polymerase (RNAP), probably by partially suppressing pausing. In the presence of Rho, modulates most Rho-dependent termination events by interacting with the RNAP to render the complex more susceptible to the termination activity of Rho. May be required to overcome a kinetic limitation of Rho to function at certain terminators. Also involved in ribosomal RNA transcriptional antitermination. In Buchnera aphidicola subsp. Acyrthosiphon pisum (strain APS) (Acyrthosiphon pisum symbiotic bacterium), this protein is Transcription termination/antitermination protein NusG.